The chain runs to 77 residues: uncharacterized protein (77 aa).

Residues 56-77 form a disordered region; that stretch reads SVIPKQQPPSSAAAISESEFED. Positions 65–77 are enriched in low complexity; the sequence is SSAAAISESEFED.

This is an uncharacterized protein from Frog virus 3 (isolate Goorha) (FV-3).